A 675-amino-acid chain; its full sequence is uncharacterized protein (675 aa).

This is an uncharacterized protein from Homo sapiens (Human).